A 286-amino-acid polypeptide reads, in one-letter code: ATP synthase gamma chain (286 aa).

It belongs to the ATPase gamma chain family. F-type ATPases have 2 components, CF(1) - the catalytic core - and CF(0) - the membrane proton channel. CF(1) has five subunits: alpha(3), beta(3), gamma(1), delta(1), epsilon(1). CF(0) has three main subunits: a, b and c.

It localises to the cell inner membrane. In terms of biological role, produces ATP from ADP in the presence of a proton gradient across the membrane. The gamma chain is believed to be important in regulating ATPase activity and the flow of protons through the CF(0) complex. This is ATP synthase gamma chain from Pseudoalteromonas translucida (strain TAC 125).